We begin with the raw amino-acid sequence, 480 residues long: MLEFLRGRDVLVAGWGISGRSLVEPLRDIGAHPVVTDSGAKALAEAAELGLEVATSVELESADLSRFALVITSPGWRPDSPVLVSAVTEGIPVWGDVEFAWWVDQARIYGPVRKWLVVTGTNGKTTTTQMTHAILRAAGIASVACGNIGLPILDALRRNPGPQVLAVELSSFQLHWAPSVRPEAGVVLNVAEDHLDWHGGLDAYAAAKARALVGRIGVVGLDDPVAAALARRSKARRTVGFRVGVPADGELGVVDGKLLDRAFTKAAILAEVGDISPPGPAGVADALAAAALTRAIDVAPQFVKEGLQEHKVGPHRAAFVREVAGVEFIDDSKATNPHAARSSILAHPHVVWIAGGRLKGAAVEDLVEEVADRLVAAVLIGVDAPVIAAALARHAPEVPVVEVRAGDDAVMADDPLRPDEADAVMAAAVRTAAGYARAGDTVLLAPAAASLDMFADYTHRGRSFADAVHALEDGDIGRQP.

120–126 (GTNGKTT) contacts ATP.

This sequence belongs to the MurCDEF family.

The protein localises to the cytoplasm. It carries out the reaction UDP-N-acetyl-alpha-D-muramoyl-L-alanine + D-glutamate + ATP = UDP-N-acetyl-alpha-D-muramoyl-L-alanyl-D-glutamate + ADP + phosphate + H(+). Its pathway is cell wall biogenesis; peptidoglycan biosynthesis. Cell wall formation. Catalyzes the addition of glutamate to the nucleotide precursor UDP-N-acetylmuramoyl-L-alanine (UMA). The chain is UDP-N-acetylmuramoylalanine--D-glutamate ligase from Nocardia farcinica (strain IFM 10152).